The primary structure comprises 442 residues: tRNA modification GTPase MnmE (442 aa).

Residues Arg27, Glu84, and Lys124 each coordinate (6S)-5-formyl-5,6,7,8-tetrahydrofolate. A TrmE-type G domain is found at 221–366 (GFQIVILGAP…LMELISQASA (146 aa)). GTP contacts are provided by residues 231–236 (NAGKSS), 250–256 (TEEPGTT), 275–278 (DTAG), and 329–332 (NKAD). Ser235 and Thr256 together coordinate Mg(2+). Residue Lys442 participates in (6S)-5-formyl-5,6,7,8-tetrahydrofolate binding.

The protein belongs to the TRAFAC class TrmE-Era-EngA-EngB-Septin-like GTPase superfamily. TrmE GTPase family. As to quaternary structure, homodimer. Heterotetramer of two MnmE and two MnmG subunits. K(+) serves as cofactor.

The protein resides in the cytoplasm. Functionally, exhibits a very high intrinsic GTPase hydrolysis rate. Involved in the addition of a carboxymethylaminomethyl (cmnm) group at the wobble position (U34) of certain tRNAs, forming tRNA-cmnm(5)s(2)U34. This Chelativorans sp. (strain BNC1) protein is tRNA modification GTPase MnmE.